A 926-amino-acid polypeptide reads, in one-letter code: Centrosomal protein of 104 kDa (926 aa).

The stretch at 212-279 (EVAQIIRRLD…DLAKEKKQQM (68 aa)) forms a coiled coil. Residues 345-419 (LQEKPSASSP…RGVAGEPEPL (75 aa)) are disordered. Positions 398-409 (AEVKEADSDVRR) are enriched in basic and acidic residues. 2 HEAT repeats span residues 522 to 558 (THCV…ALFK) and 603 to 639 (GFTV…YRQH). A coiled-coil region spans residues 678–730 (EAEVRAQKRVATKEAEKQKKEEMKALQGQSGELRETQAGVQEKESEAVKLRNQ). 2 stretches are compositionally biased toward basic and acidic residues: residues 690 to 701 (KEAEKQKKEEMK) and 718 to 729 (QEKESEAVKLRN). 2 disordered regions span residues 690 to 741 (KEAE…VLPD) and 885 to 926 (APQQ…YMRR). The segment covering 889–903 (GKGPAAAKSSTSAPK) has biased composition (low complexity). Over residues 916–926 (SKSSSRTYMRR) the composition is skewed to polar residues.

Interacts with CCP110 and CEP97. Interacts with ARMC9, TOGARAM1, CCDC66 and CSPP1.

The protein resides in the cell projection. Its subcellular location is the cilium. It localises to the cytoplasm. The protein localises to the cytoskeleton. It is found in the microtubule organizing center. The protein resides in the centrosome. Its subcellular location is the centriole. It localises to the spindle pole. Required for ciliogenesis and for structural integrity at the ciliary tip. The sequence is that of Centrosomal protein of 104 kDa (Cep104) from Mus musculus (Mouse).